We begin with the raw amino-acid sequence, 351 residues long: Terpene cyclase sdgD (351 aa).

Transmembrane regions (helical) follow at residues 7 to 27 (INFI…TILI), 62 to 82 (TGVP…WPVI), 89 to 109 (LSLL…LLLL), 126 to 146 (WVGL…YCAI), 160 to 180 (IPHV…LVAL), 193 to 213 (VVVA…FMAS), 229 to 249 (IYIF…LASL), 281 to 301 (FLQW…VAVY), and 316 to 336 (LEVC…LLIW).

Belongs to the membrane-bound ascI terpene cyclase family.

It localises to the membrane. Its pathway is secondary metabolite biosynthesis. Epoxide hydrolase; part of the gene cluster that mediates the biosynthesis of the polyenes aspernidgulenes. The carbon backbone of aspernidgulenes is synthesized by the HR-PKS sdgA, which accepts acetyl-CoA as the starter unit and performs malonyl-CoA extensions as well as regioselective methylation and reduction. The resulting nonaketide offloads the HR-PKS by intramolecular lactonization to yield the 5,6-dihydro-alpha-pyrone-containing hexaenoic acids preaspernidgulene A1 and A2. The FAD-dependent monooxygenase sdgC then installs the first epoxide on the penultimate double bond. Subsequently, the FAD-dependent monooxygenase sdgF presumably generates a ketone intermediate through Meinwald rearrangement involving a hydride shift. Next, sdgC introduces another epoxide on the last olefin of the ketone intermediate after E/Z isomerization. The epoxide hydrolase sdgD then catalyzes stereospecific cyclization of the 5,6-dihydro-alpha-pyrone and opening of the epoxide ring to form an oxygenated trimethylcyclopentanone and an oxabicyclo[2.2.1]heptane unit. Finally, the bicyclic unit undergoes hydrolytic cleavage, either spontaneously or catalyzed by sdgD, to assemble the dimethyl-gamma-lactone moiety in aspernidgulene A1. The sequence is that of Terpene cyclase sdgD from Emericella nidulans (strain FGSC A4 / ATCC 38163 / CBS 112.46 / NRRL 194 / M139) (Aspergillus nidulans).